We begin with the raw amino-acid sequence, 380 residues long: Gonadotropin-releasing hormone II receptor (380 aa).

At 1–40 the chain is on the extracellular side; the sequence is MSAVNGTPWGSSAREEVWAGSGVEVEGSELPTFSTAAKVR. A helical membrane pass occupies residues 41–60; sequence VGVTIVLFVSSAGGNLAVLW. At 61–76 the chain is on the cytoplasmic side; the sequence is SVTRPQPSQLRPSPVR. The helical transmembrane segment at 77–96 threads the bilayer; it reads RLFAHLAAADLLVTFVVMPL. Topologically, residues 97–114 are extracellular; sequence DATWNITVQWLAGDIACR. N-linked (GlcNAc...) asparagine glycosylation is present at N101. C113 and C188 are disulfide-bonded. A helical transmembrane segment spans residues 115-136; the sequence is TLMFLKLMAMYAAAFLPVVIGL. Topologically, residues 137-160 are cytoplasmic; sequence DRQAAVLNPLGSRSGVRKLLGAAW. The helical transmembrane segment at 161-178 threads the bilayer; it reads GLSFLLALPQLFLFHTVH. Topologically, residues 179–204 are extracellular; sequence RAGPVPFTQCATKGSFKARWQETTYN. The chain crosses the membrane as a helical span at residues 205 to 224; the sequence is LFTFCCLFLLPLTAMAICYS. Over 225–278 the chain is Cytoplasmic; it reads RIVLGVSSPRTRKGSHAPAGEFALRRSFDNRPRVRLRALRLALLVLLTFILCWT. The chain crosses the membrane as a helical span at residues 279–297; that stretch reads PYYLLGLWYWFSPSMLSEV. The Extracellular segment spans residues 298-303; the sequence is PPSLSH. A helical transmembrane segment spans residues 304–323; it reads ILFLFGLLNAPLDPLLYGAF. Residues 324 to 380 lie on the Cytoplasmic side of the membrane; sequence TLGCRRGHQELSMDSSREEGSRRMFQQDIQALRQTEVQKTVTSRKAGETKDIPITSI.

The protein belongs to the G-protein coupled receptor 1 family. Post-translationally, phosphorylated on the C-terminal cytoplasmic tail.

Its subcellular location is the cell membrane. In terms of biological role, receptor for gonadotropin releasing hormone II (GnRH II). This receptor mediates its action by association with G proteins that activate a phosphatidylinositol-calcium second messenger system. In Callithrix jacchus (White-tufted-ear marmoset), this protein is Gonadotropin-releasing hormone II receptor (GNRHR2).